A 451-amino-acid chain; its full sequence is Uronate isomerase (451 aa).

Belongs to the metallo-dependent hydrolases superfamily. Uronate isomerase family.

The enzyme catalyses D-glucuronate = D-fructuronate. It catalyses the reaction aldehydo-D-galacturonate = keto-D-tagaturonate. It functions in the pathway carbohydrate metabolism; pentose and glucuronate interconversion. The chain is Uronate isomerase from Thermotoga petrophila (strain ATCC BAA-488 / DSM 13995 / JCM 10881 / RKU-1).